The primary structure comprises 283 residues: Glutamyl-Q tRNA(Asp) synthetase (283 aa).

Residues 5–9 (RFAPT) and Glu41 each bind L-glutamate. The short motif at 8–18 (PTPSGPLHLGS) is the 'HIGH' region element. Cys97, Cys99, Tyr111, and Cys115 together coordinate Zn(2+). Residues Tyr168 and Arg186 each contribute to the L-glutamate site. Residues 224–228 (KLSKQ) carry the 'KMSKS' region motif. An ATP-binding site is contributed by Lys227.

Belongs to the class-I aminoacyl-tRNA synthetase family. GluQ subfamily. Zn(2+) is required as a cofactor.

Functionally, catalyzes the tRNA-independent activation of glutamate in presence of ATP and the subsequent transfer of glutamate onto a tRNA(Asp). Glutamate is transferred on the 2-amino-5-(4,5-dihydroxy-2-cyclopenten-1-yl) moiety of the queuosine in the wobble position of the QUC anticodon. This is Glutamyl-Q tRNA(Asp) synthetase from Idiomarina loihiensis (strain ATCC BAA-735 / DSM 15497 / L2-TR).